The sequence spans 957 residues: Glycine dehydrogenase (decarboxylating) (957 aa).

Lysine 708 carries the N6-(pyridoxal phosphate)lysine modification.

This sequence belongs to the GcvP family. The glycine cleavage system is composed of four proteins: P, T, L and H. Requires pyridoxal 5'-phosphate as cofactor.

It catalyses the reaction N(6)-[(R)-lipoyl]-L-lysyl-[glycine-cleavage complex H protein] + glycine + H(+) = N(6)-[(R)-S(8)-aminomethyldihydrolipoyl]-L-lysyl-[glycine-cleavage complex H protein] + CO2. In terms of biological role, the glycine cleavage system catalyzes the degradation of glycine. The P protein binds the alpha-amino group of glycine through its pyridoxal phosphate cofactor; CO(2) is released and the remaining methylamine moiety is then transferred to the lipoamide cofactor of the H protein. This chain is Glycine dehydrogenase (decarboxylating), found in Pectobacterium atrosepticum (strain SCRI 1043 / ATCC BAA-672) (Erwinia carotovora subsp. atroseptica).